Consider the following 412-residue polypeptide: Alanyl-tRNA editing protein Aarsd1-B (412 aa).

Zn(2+) contacts are provided by H108, H112, C208, and H212.

It belongs to the class-II aminoacyl-tRNA synthetase family. Alax-L subfamily. Zn(2+) serves as cofactor.

The protein resides in the cytoplasm. In terms of biological role, functions in trans to edit the amino acid moiety from incorrectly charged tRNA(Ala). The sequence is that of Alanyl-tRNA editing protein Aarsd1-B (aarsd1-b) from Xenopus laevis (African clawed frog).